Consider the following 411-residue polypeptide: Dual-specificity RNA methyltransferase RlmN (411 aa).

Catalysis depends on Glu-125, which acts as the Proton acceptor. The 250-residue stretch at 131-380 (EEGRGTLCIS…IRTPRGRDIL (250 aa)) folds into the Radical SAM core domain. Residues Cys-138 and Cys-383 are joined by a disulfide bond. Positions 145, 149, and 152 each coordinate [4Fe-4S] cluster. S-adenosyl-L-methionine contacts are provided by residues 209 to 210 (GE), Ser-241, 263 to 265 (SLH), and Asn-340. Cys-383 functions as the S-methylcysteine intermediate in the catalytic mechanism.

It belongs to the radical SAM superfamily. RlmN family. It depends on [4Fe-4S] cluster as a cofactor.

It localises to the cytoplasm. It catalyses the reaction adenosine(2503) in 23S rRNA + 2 reduced [2Fe-2S]-[ferredoxin] + 2 S-adenosyl-L-methionine = 2-methyladenosine(2503) in 23S rRNA + 5'-deoxyadenosine + L-methionine + 2 oxidized [2Fe-2S]-[ferredoxin] + S-adenosyl-L-homocysteine. The enzyme catalyses adenosine(37) in tRNA + 2 reduced [2Fe-2S]-[ferredoxin] + 2 S-adenosyl-L-methionine = 2-methyladenosine(37) in tRNA + 5'-deoxyadenosine + L-methionine + 2 oxidized [2Fe-2S]-[ferredoxin] + S-adenosyl-L-homocysteine. Specifically methylates position 2 of adenine 2503 in 23S rRNA and position 2 of adenine 37 in tRNAs. m2A2503 modification seems to play a crucial role in the proofreading step occurring at the peptidyl transferase center and thus would serve to optimize ribosomal fidelity. This chain is Dual-specificity RNA methyltransferase RlmN, found in Brucella suis biovar 1 (strain 1330).